We begin with the raw amino-acid sequence, 834 residues long: Mannosyl-oligosaccharide glucosidase (834 aa).

Residues Met1–Ala10 are compositionally biased toward basic residues. A disordered region spans residues Met1–Gly37. Residues Met1 to Ala43 are Cytoplasmic-facing. Residues Arg3–Arg9 carry the Endoplasmic reticulum targeting motif. A compositionally biased stretch (basic and acidic residues) spans Arg17–Arg31. The helical; Signal-anchor for type II membrane protein transmembrane segment at Leu44–Leu64 threads the bilayer. The Lumenal segment spans residues Arg65–Tyr834. Positions Pro74 to Cys136 are required for endoplasmic reticulum targeting. The Proton donor role is filled by Asp580. Residue Asn654 is glycosylated (N-linked (GlcNAc...) asparagine). Glu804 functions as the Proton acceptor in the catalytic mechanism.

The protein belongs to the glycosyl hydrolase 63 family.

The protein localises to the endoplasmic reticulum membrane. It catalyses the reaction N(4)-(alpha-D-Glc-(1-&gt;2)-alpha-D-Glc-(1-&gt;3)-alpha-D-Glc-(1-&gt;3)-alpha-D-Man-(1-&gt;2)-alpha-D-Man-(1-&gt;2)-alpha-D-Man-(1-&gt;3)-[alpha-D-Man-(1-&gt;2)-alpha-D-Man-(1-&gt;3)-[alpha-D-Man-(1-&gt;2)-alpha-D-Man-(1-&gt;6)]-alpha-D-Man-(1-&gt;6)]-beta-D-Man-(1-&gt;4)-beta-D-GlcNAc-(1-&gt;4)-beta-D-GlcNAc)-L-asparaginyl-[protein] + H2O = N(4)-(alpha-D-Glc-(1-&gt;3)-alpha-D-Glc-(1-&gt;3)-alpha-D-Man-(1-&gt;2)-alpha-D-Man-(1-&gt;2)-alpha-D-Man-(1-&gt;3)-[alpha-D-Man-(1-&gt;2)-alpha-D-Man-(1-&gt;3)-[alpha-D-Man-(1-&gt;2)-alpha-D-Man-(1-&gt;6)]-alpha-D-Man-(1-&gt;6)]-beta-D-Man-(1-&gt;4)-beta-D-GlcNAc-(1-&gt;4)-beta-D-GlcNAc)-L-asparaginyl-[protein] + beta-D-glucose. It functions in the pathway glycan metabolism; N-glycan degradation. Inhibited by the deoxynojirimycin derivative N-9'-Methoxynonyl-1-Deoxynojirimycin. In the context of N-glycan degradation, cleaves the distal alpha 1,2-linked glucose residue from the Glc(3)Man(9)GlcNAc(2) oligosaccharide precursor in a highly specific manner. In terms of biological role, (Microbial infection) Required for successful influenza or dengue virus infection; inhibition of its activity by a deoxynojirimycin derivative prevents death in mice infected with lethal doses of influenza or dengue viruses, even when administrated after infection. This is Mannosyl-oligosaccharide glucosidase from Mus musculus (Mouse).